The following is a 1749-amino-acid chain: Kinesin-like protein KIF13A (1749 aa).

In terms of domain architecture, Kinesin motor spans 5-352 (KVKVAVRVRP…LRYADRAKRI (348 aa)). 102 to 109 (GQTGSGKS) provides a ligand contact to ATP. Residues 359-431 (NEDPNAKVIR…QERQRQLESM (73 aa)) are a coiled coil. The FHA domain occupies 469-519 (HTRVGADTSQDIQLFGIGIQPEHCEIDIAADGDITLTPKENARSCVNGTLV). Positions 552–775 (LKDFERETSS…VPEAKRLYGK (224 aa)) form a coiled coil. 2 disordered regions span residues 633 to 652 (QQLS…LAYS) and 834 to 853 (IPER…SGSL). A Phosphoserine modification is found at S636. The stretch at 1086-1126 (SDALIKRREYLDEQIKKVSNKKEKTEDDMEREARLVEQWVG) forms a coiled coil. Phosphoserine is present on S1274. Residues 1370–1383 (LSTPNVHNVSSSRP) are compositionally biased toward polar residues. 2 disordered regions span residues 1370–1402 (LSTP…QLDV) and 1417–1436 (TLPR…ENPH). Positions 1421–1430 (DSPRRSKEGC) are enriched in basic and acidic residues. 6 positions are modified to phosphoserine: S1441, S1477, S1481, S1524, S1600, and S1650. Residues 1475-1499 (LLSQEDSEEEENELEALSRKLMLTQ) are a coiled coil. Disordered regions lie at residues 1584-1665 (CAEP…GHQA) and 1698-1749 (DFDG…TATR). Basic and acidic residues predominate over residues 1719-1741 (ETDHKGIPERPPDADRLHPKIEN).

This sequence belongs to the TRAFAC class myosin-kinesin ATPase superfamily. Kinesin family. As to quaternary structure, interacts with AP1G1 and AP1G2. Interacts with ZFYVE26. Interacts with AP2B1.

Its subcellular location is the golgi apparatus membrane. The protein localises to the cytoplasm. It is found in the cytoskeleton. The protein resides in the microtubule organizing center. It localises to the centrosome. Its subcellular location is the midbody. The protein localises to the endosome membrane. In terms of biological role, plus end-directed microtubule-dependent motor protein involved in intracellular transport and regulating various processes such as mannose-6-phosphate receptor (M6PR) transport to the plasma membrane, endosomal sorting during melanosome biogenesis and cytokinesis. During melanosome maturation, required for delivering melanogenic enzymes from recycling endosomes to nascent melanosomes by creating peripheral recycling endosomal subdomains in melanocytes. Also required for the abscission step in cytokinesis: mediates translocation of ZFYVE26, and possibly TTC19, to the midbody during cytokinesis. Mediates the transport of M6PR-containing vesicles from trans-Golgi network to the plasma membrane via direct interaction with the AP-1 complex. The polypeptide is Kinesin-like protein KIF13A (Kif13a) (Mus musculus (Mouse)).